The sequence spans 97 residues: UPF0213 protein BLi00048/BL00536 (97 aa).

A GIY-YIG domain is found at 4–79; sequence NSHYFYVLSC…KKLSRKNKER (76 aa).

Belongs to the UPF0213 family.

The protein is UPF0213 protein BLi00048/BL00536 of Bacillus licheniformis (strain ATCC 14580 / DSM 13 / JCM 2505 / CCUG 7422 / NBRC 12200 / NCIMB 9375 / NCTC 10341 / NRRL NRS-1264 / Gibson 46).